The primary structure comprises 183 residues: MFKQLRPALASLLVLSLVTGVAYPLLVTGIAQLAFPEQANGSLLRDAEGKVLGSRLIAQKFDGEEWFHSRPSAGDYATVSSAASNLAPSNPALAERIARDAAQERIADQGPVPLALVTTSGSGLDPQLPPQAARYQALRVATARGLPLRLVEDLVESHTERPLVGPAVVNVLALNMALTGLKR.

A helical transmembrane segment spans residues 10-30 (ASLLVLSLVTGVAYPLLVTGI).

This sequence belongs to the KdpC family. The system is composed of three essential subunits: KdpA, KdpB and KdpC.

It is found in the cell inner membrane. Functionally, part of the high-affinity ATP-driven potassium transport (or Kdp) system, which catalyzes the hydrolysis of ATP coupled with the electrogenic transport of potassium into the cytoplasm. This subunit acts as a catalytic chaperone that increases the ATP-binding affinity of the ATP-hydrolyzing subunit KdpB by the formation of a transient KdpB/KdpC/ATP ternary complex. The protein is Potassium-transporting ATPase KdpC subunit of Pseudomonas aeruginosa (strain UCBPP-PA14).